The sequence spans 351 residues: Ferrochelatase (351 aa).

His221 and Glu302 together coordinate Fe cation.

This sequence belongs to the ferrochelatase family.

The protein resides in the cytoplasm. It catalyses the reaction heme b + 2 H(+) = protoporphyrin IX + Fe(2+). Its pathway is porphyrin-containing compound metabolism; protoheme biosynthesis; protoheme from protoporphyrin-IX: step 1/1. Functionally, catalyzes the ferrous insertion into protoporphyrin IX. In Bradyrhizobium sp. (strain BTAi1 / ATCC BAA-1182), this protein is Ferrochelatase.